The sequence spans 1624 residues: Putative serine/threonine-protein kinase/receptor R831 (1624 aa).

An N-terminal signal peptide occupies residues 1 to 25 (MHSVYTKYTIILILLVIYQGLPTNT). N-linked (GlcNAc...) asparagine; by host glycosylation is found at N152, N169, N200, N205, N225, N240, N245, N292, N364, N479, N541, N720, and N737. Residues 747–767 (VIPIACIFGLLLLTLLIVIIF) form a helical membrane-spanning segment. A Protein kinase 1 domain is found at 786–1049 (LEIGETLGTG…EIMTRLSNIL (264 aa)). ATP-binding positions include 792 to 800 (LGTGGYGEV) and K813. D908 acts as the Proton acceptor in catalysis. Positions 1054–1093 (NMTSGTSSSSLSSGGIGKSITDSKSSNSRSSVESSNTSNT) are enriched in low complexity. A disordered region spans residues 1054–1101 (NMTSGTSSSSLSSGGIGKSITDSKSSNSRSSVESSNTSNTFRGIDRHN). One can recognise a Guanylate cyclase domain in the interval 1109 to 1252 (TVAFIDIISA…STVNITGKIT (144 aa)). The Protein kinase 2 domain maps to 1364–1615 (ISIGKQIGLG…MTEVVQQLML (252 aa)). ATP is bound by residues 1370–1378 (IGLGSYGIV) and K1391. Residue D1487 is the Proton acceptor of the active site.

It is found in the membrane. The enzyme catalyses L-seryl-[protein] + ATP = O-phospho-L-seryl-[protein] + ADP + H(+). The catalysed reaction is L-threonyl-[protein] + ATP = O-phospho-L-threonyl-[protein] + ADP + H(+). The chain is Putative serine/threonine-protein kinase/receptor R831 from Acanthamoeba polyphaga (Amoeba).